A 165-amino-acid chain; its full sequence is Large ribosomal subunit protein uL10 (165 aa).

This sequence belongs to the universal ribosomal protein uL10 family. Part of the ribosomal stalk of the 50S ribosomal subunit. The N-terminus interacts with L11 and the large rRNA to form the base of the stalk. The C-terminus forms an elongated spine to which L12 dimers bind in a sequential fashion forming a multimeric L10(L12)X complex.

Functionally, forms part of the ribosomal stalk, playing a central role in the interaction of the ribosome with GTP-bound translation factors. In Dechloromonas aromatica (strain RCB), this protein is Large ribosomal subunit protein uL10.